A 536-amino-acid chain; its full sequence is Arylsulfatase (536 aa).

The Ca(2+) site is built by Asp-13, Asp-14, and Cys-51. Cys-51 serves as the catalytic Nucleophile. Cys-51 bears the 3-oxoalanine (Cys) mark. Residue His-115 is part of the active site. The Ca(2+) site is built by Asp-317 and Asn-318.

The protein belongs to the sulfatase family. As to quaternary structure, monomer. It depends on Ca(2+) as a cofactor. In terms of processing, the conversion to 3-oxoalanine (also known as C-formylglycine, FGly), of a serine or cysteine residue in prokaryotes and of a cysteine residue in eukaryotes, is critical for catalytic activity.

It is found in the cytoplasm. The enzyme catalyses an aryl sulfate + H2O = a phenol + sulfate + H(+). In terms of biological role, hydrolyzes the bond between sulfate and the aromatic ring in a compound such as 4-nitrocatechol sulfate. The sequence is that of Arylsulfatase (atsA) from Pseudomonas aeruginosa (strain ATCC 15692 / DSM 22644 / CIP 104116 / JCM 14847 / LMG 12228 / 1C / PRS 101 / PAO1).